Consider the following 483-residue polypeptide: Cobyric acid synthase (483 aa).

The GATase cobBQ-type domain occupies 251 to 438; the sequence is ALIVAVPMLP…LHGVFSADRF (188 aa). Cysteine 333 (nucleophile) is an active-site residue. Residue histidine 430 is part of the active site.

This sequence belongs to the CobB/CobQ family. CobQ subfamily.

The protein operates within cofactor biosynthesis; adenosylcobalamin biosynthesis. Catalyzes amidations at positions B, D, E, and G on adenosylcobyrinic A,C-diamide. NH(2) groups are provided by glutamine, and one molecule of ATP is hydrogenolyzed for each amidation. This Brucella suis (strain ATCC 23445 / NCTC 10510) protein is Cobyric acid synthase.